A 150-amino-acid polypeptide reads, in one-letter code: Large ribosomal subunit protein bL9 (150 aa).

The protein belongs to the bacterial ribosomal protein bL9 family.

Binds to the 23S rRNA. This chain is Large ribosomal subunit protein bL9, found in Limosilactobacillus reuteri (strain DSM 20016) (Lactobacillus reuteri).